Reading from the N-terminus, the 664-residue chain is Protein cueball (664 aa).

Residues 1 to 21 form the signal peptide; the sequence is MRNLGIAVTFAVLLVIGYVTA. Topologically, residues 22 to 552 are extracellular; that stretch reads LEWDAVVTTD…VTYCKNSFNR (531 aa). Residues N40, N140, and N188 are each glycosylated (N-linked (GlcNAc...) asparagine). 3 LDL-receptor class B repeats span residues 115 to 157, 168 to 211, and 212 to 257; these read RKLY…ENHD, RHLY…DHYN, and NRIY…NSQY. 3 EGF-like domains span residues 367–399, 402–438, and 473–510; these read EIPI…FEGE, DRNI…ARCE, and EEYT…KRCE. Intrachain disulfides connect C371–C380, C375–C390, C406–C416, C410–C426, C428–C437, C477–C487, C481–C498, and C500–C509. The N-linked (GlcNAc...) asparagine glycan is linked to N431. A glycan (N-linked (GlcNAc...) asparagine) is linked at N491. The N-linked (GlcNAc...) asparagine glycan is linked to N551. The chain crosses the membrane as a helical span at residues 553-573; it reads TVVYVSLAFTASLVTLVTILC. At 574–664 the chain is on the cytoplasmic side; that stretch reads TVRRMYERNR…KLPSCVAEKN (91 aa).

Belongs to the cueball family.

Its subcellular location is the cell membrane. Its function is as follows. Has a role in spermatogenesis and oogenesis. The sequence is that of Protein cueball from Aedes aegypti (Yellowfever mosquito).